The chain runs to 541 residues: Sorting nexin-27 (541 aa).

The disordered stretch occupies residues 1–42 (MADEDGEGIHPSAPHRNGGGGGGGGSGLHCAGNGGGGGGGPR). Residues 17–41 (NGGGGGGGGSGLHCAGNGGGGGGGP) show a composition bias toward gly residues. The PDZ domain maps to 43 to 136 (VVRIVKSESG…ELILTVLSVP (94 aa)). Residues Ser51 and Ser62 each carry the phosphoserine modification. The region spanning 161-269 (QAVPISVPRY…EFLSESDENY (109 aa)) is the PX domain. Residues 273–362 (SDVELRVALP…TCLTIRKWLF (90 aa)) form the Ras-associating domain. An FERM-like region F1 region spans residues 273–362 (SDVELRVALP…TCLTIRKWLF (90 aa)). The segment at 373-421 (NDLAVTYFFHQAVDDVKKGYIKAEEKSYQLQKLYEQRKMVMYLNMLRTC) is FERM-like region F2. An FERM-like region F3 region spans residues 425 to 525 (NEIIFPHCAC…RVFCELKWRK (101 aa)).

The protein belongs to the sorting nexin family. In terms of assembly, core component of the SNX27-retromer, a multiprotein complex composed of SNX27, the WASH complex and the retromer complex. Interacts (via PDZ domain) with a number of target transmembrane proteins (via PDZ-binding motif): ABCC4, ADRB2, ARHGEF7, GRIA1, GRIA2, GRIN1, GRIN2A GRIN2C, KCNJ6, KCNJ9 and SLC2A1/GLUT1. Interacts (via the FERM-like regions) with the WASH complex. Interacts with SNX1. Interacts with CYTIP. Isoform 1 and isoform 2 directly interact with DGKZ. Isoform 1 and isoform 2 interact with HT4R isoform 5-HTA(A). Interacts with MCC. Interacts (via PDZ domains) with SLC9A3; directs SLC9A3 membrane insertion from early endosomes to the plasma membrane. Widely expressed. Expressed in cells of hematopoietic origin (at protein level).

The protein resides in the early endosome membrane. The protein localises to the cytoplasm. Its subcellular location is the cytosol. In terms of biological role, involved in the retrograde transport from endosome to plasma membrane, a trafficking pathway that promotes the recycling of internalized transmembrane proteins. Following internalization, endocytosed transmembrane proteins are delivered to early endosomes and recycled to the plasma membrane instead of being degraded in lysosomes. SNX27 specifically binds and directs sorting of a subset of transmembrane proteins containing a PDZ-binding motif at the C-terminus: following interaction with target transmembrane proteins, associates with the retromer complex, preventing entry into the lysosomal pathway, and promotes retromer-tubule based plasma membrane recycling. SNX27 also binds with the WASH complex. Interacts with membranes containing phosphatidylinositol-3-phosphate (PtdIns(3P)). May participate in establishment of natural killer cell polarity. Recruits CYTIP to early endosomes. The polypeptide is Sorting nexin-27 (SNX27) (Homo sapiens (Human)).